We begin with the raw amino-acid sequence, 323 residues long: Aldo-keto reductase family 1 member C21 (323 aa).

Residue 20–24 (GFGTA) coordinates NADP(+). Residue lysine 31 coordinates substrate. Aspartate 50 provides a ligand contact to NADP(+). The Proton donor role is filled by tyrosine 55. Histidine 117 provides a ligand contact to substrate. NADP(+)-binding positions include 166 to 167 (SN), glutamine 190, 216 to 224 (YGVLGTQRY), and 270 to 280 (TSLKEERIKEN).

It belongs to the aldo/keto reductase family. In terms of assembly, monomer. In terms of tissue distribution, detected in kidney and brain.

The protein resides in the cytoplasm. It catalyses the reaction androsterone + NADP(+) = 5alpha-androstan-3,17-dione + NADPH + H(+). The catalysed reaction is androsterone + NAD(+) = 5alpha-androstan-3,17-dione + NADH + H(+). Inhibited by high concentrations of substrate. Functionally, NADP-dependent 17-alpha-hydroxysteroid dehydrogenase that converts 5-alpha-androstane-3,17-dione into androsterone. Has lower 3-alpha-hydroxysteroid dehydrogenase activity. Has broad substrate specificity and acts on various 17-alpha-hydroxysteroids, 17-ketosteroids, 3-alpha hydroxysteroids and 3-ketosteroids. Reduction of keto groups is strictly stereoselective. Reduction of 17-ketosteroids yields only 17-alpha-hydroxysteroids. Likewise, reduction of 3-ketosteroids yields only 3-alpha-hydroxysteroids. The polypeptide is Aldo-keto reductase family 1 member C21 (Akr1c21) (Mus musculus (Mouse)).